Consider the following 52-residue polypeptide: uncharacterized protein (52 aa).

A disordered region spans residues 1–52 (MVNNDAKIGRREFYDRVESVRPKSPPRERPTYTYSNSRTVDGYSNRGPRADF). Over residues 7 to 30 (KIGRREFYDRVESVRPKSPPRERP) the composition is skewed to basic and acidic residues.

This is an uncharacterized protein from Dictyostelium discoideum (Social amoeba).